The chain runs to 457 residues: GTPase Der (457 aa).

EngA-type G domains follow at residues 4 to 169 (PTIA…PENN) and 177 to 352 (IMMS…NQHR). GTP-binding positions include 10-17 (GRPNVGKS), 57-61 (DTGGL), 120-123 (NKCE), 183-190 (GRPNVGKS), 230-234 (DTAGI), and 295-298 (NKWD). The region spanning 353–438 (RRVTTSVVNE…PLILLWRGKQ (86 aa)) is the KH-like domain.

It belongs to the TRAFAC class TrmE-Era-EngA-EngB-Septin-like GTPase superfamily. EngA (Der) GTPase family. Associates with the 50S ribosomal subunit.

Functionally, GTPase that plays an essential role in the late steps of ribosome biogenesis. The protein is GTPase Der of Prochlorococcus marinus (strain MIT 9215).